A 281-amino-acid chain; its full sequence is Arylamine N-acetyltransferase (281 aa).

C69 acts as the Acyl-thioester intermediate in catalysis. Active-site residues include H107 and D122. K214 and K281 each carry N6-acetyllysine.

It belongs to the arylamine N-acetyltransferase family. Homodimer. Post-translationally, acetylated on Lys-214 and Lys-281. Deacetylated by CobB.

It is found in the cytoplasm. The enzyme catalyses an arylamine + acetyl-CoA = an N-acetylarylamine + CoA. It catalyses the reaction an N-hydroxyarylamine + acetyl-CoA = an N-acetoxyarylamine + CoA. Its activity is regulated as follows. Inhibited by salicylic acid, acetylsalicylic acid, 2,6-dichrolo-4-nitrophenol, N-ethylmaleimide and iodoacetamide. In terms of biological role, catalyzes the acetyl-CoA-dependent N-acetylation of aromatic amines, and, probably, the O-acetylation of N-hydroxyarylamines. In vitro, catalyzes the N-acetylation of various arylamines such as aminobenzoic acid, aminophenol, aminotoluene, phenetidine, anisidine, aniline, isoniazid and 2-amino-fluorene. N-hydroxyarylamine O-acetyltransferase activity has not been assayed directly, however, NhoA activity is required for the mutagenicity of nitroaromatic compounds, suggesting that it also has O-acetyltransferase activity. In Escherichia coli (strain K12), this protein is Arylamine N-acetyltransferase (nhoA).